The following is a 421-amino-acid chain: UDP-N-acetylglucosamine 1-carboxyvinyltransferase (421 aa).

22–23 serves as a coordination point for phosphoenolpyruvate; sequence KN. Arginine 92 lines the UDP-N-acetyl-alpha-D-glucosamine pocket. The Proton donor role is filled by aspartate 116. Residues 121 to 125, aspartate 307, and isoleucine 330 each bind UDP-N-acetyl-alpha-D-glucosamine; that span reads RPIDQ.

Belongs to the EPSP synthase family. MurA subfamily.

Its subcellular location is the cytoplasm. The enzyme catalyses phosphoenolpyruvate + UDP-N-acetyl-alpha-D-glucosamine = UDP-N-acetyl-3-O-(1-carboxyvinyl)-alpha-D-glucosamine + phosphate. It functions in the pathway cell wall biogenesis; peptidoglycan biosynthesis. In terms of biological role, cell wall formation. Adds enolpyruvyl to UDP-N-acetylglucosamine. The protein is UDP-N-acetylglucosamine 1-carboxyvinyltransferase of Lactobacillus johnsonii (strain CNCM I-12250 / La1 / NCC 533).